The primary structure comprises 143 residues: Envelope protein A28 homolog (143 aa).

A helical; Signal-anchor for type II membrane protein membrane pass occupies residues 1–21; the sequence is MNTVQILVVILITTALSFLVF. At 22–143 the chain is on the virion surface side; it reads QLWYYAENYE…LLRLLMANTS (122 aa).

The protein belongs to the poxviridae A28 protein family. Post-translationally, contains two intramolecular disulfide bonds. They are created by the viral disulfide bond formation pathway, a poxvirus-specific pathway that operates on the cytoplasmic side of the MV membranes.

It is found in the virion membrane. Envelope protein required for virus entry into host cell and for cell-cell fusion (syncytium formation). This chain is Envelope protein A28 homolog, found in Amsacta (AmEPV).